The following is a 549-amino-acid chain: Glucose-6-phosphate isomerase (549 aa).

E355 functions as the Proton donor in the catalytic mechanism. Active-site residues include H387 and K515.

Belongs to the GPI family.

Its subcellular location is the cytoplasm. It carries out the reaction alpha-D-glucose 6-phosphate = beta-D-fructose 6-phosphate. It functions in the pathway carbohydrate biosynthesis; gluconeogenesis. The protein operates within carbohydrate degradation; glycolysis; D-glyceraldehyde 3-phosphate and glycerone phosphate from D-glucose: step 2/4. Its function is as follows. Catalyzes the reversible isomerization of glucose-6-phosphate to fructose-6-phosphate. The chain is Glucose-6-phosphate isomerase from Pasteurella multocida (strain Pm70).